The primary structure comprises 97 residues: Aspartyl/glutamyl-tRNA(Asn/Gln) amidotransferase subunit C (97 aa).

This sequence belongs to the GatC family. As to quaternary structure, heterotrimer of A, B and C subunits.

It catalyses the reaction L-glutamyl-tRNA(Gln) + L-glutamine + ATP + H2O = L-glutaminyl-tRNA(Gln) + L-glutamate + ADP + phosphate + H(+). The enzyme catalyses L-aspartyl-tRNA(Asn) + L-glutamine + ATP + H2O = L-asparaginyl-tRNA(Asn) + L-glutamate + ADP + phosphate + 2 H(+). Its function is as follows. Allows the formation of correctly charged Asn-tRNA(Asn) or Gln-tRNA(Gln) through the transamidation of misacylated Asp-tRNA(Asn) or Glu-tRNA(Gln) in organisms which lack either or both of asparaginyl-tRNA or glutaminyl-tRNA synthetases. The reaction takes place in the presence of glutamine and ATP through an activated phospho-Asp-tRNA(Asn) or phospho-Glu-tRNA(Gln). This Sulfolobus acidocaldarius (strain ATCC 33909 / DSM 639 / JCM 8929 / NBRC 15157 / NCIMB 11770) protein is Aspartyl/glutamyl-tRNA(Asn/Gln) amidotransferase subunit C.